The following is a 510-amino-acid chain: Major facilitator superfamily domain-containing protein 8 (510 aa).

Residues 1-38 lie on the Cytoplasmic side of the membrane; it reads MASIDDDDDERTPLLQDSHIGELVETQKQLKSRWWSIR. Positions 14–15 match the Dileucine internalization motif motif; the sequence is LL. The chain crosses the membrane as a helical span at residues 39 to 59; sequence VMYLTMFLSSVGFSIVMTSIW. Residues 60–72 lie on the Extracellular side of the membrane; it reads PYLQKVDQSADAS. Residues 73-93 form a helical membrane-spanning segment; sequence FLGWVIASFSLGQMVASPLFG. Residues 94–103 are Cytoplasmic-facing; sequence LWSNHRPRRE. A helical membrane pass occupies residues 104–124; that stretch reads PLVVSITILVAASCLYAYVHV. Topologically, residues 125 to 132 are extracellular; the sequence is PASHNKYY. The chain crosses the membrane as a helical span at residues 133-155; it reads MLLARTFVGFGSGNVAVVRSYVA. Topologically, residues 156 to 171 are cytoplasmic; the sequence is GATSLSERTGAMANIS. Residues 172-192 traverse the membrane as a helical segment; sequence AFQAMGFILGPAFQAALSVIG. The Extracellular segment spans residues 193 to 209; it reads ETGITINGISLQVNMYT. The helical transmembrane segment at 210–230 threads the bilayer; the sequence is APALMGALLGIGNIILIFAIF. Residues 231-264 are Cytoplasmic-facing; the sequence is REHRVDDLEKNVSSINSESEVTDVEKANEGPIDQ. The chain crosses the membrane as a helical span at residues 265–285; sequence IAVISSNILFFVVLFVFAIFE. Over 286 to 302 the chain is Extracellular; sequence TISTPLTMDMYAWTRTQ. Residues 303-323 form a helical membrane-spanning segment; sequence AVFYNGIILAAVGVESVIVFL. Over 324–335 the chain is Cytoplasmic; it reads TVKILCKKTGER. A helical membrane pass occupies residues 336 to 356; it reads VLLLGGLAVIWIGFFILLPWG. Topologically, residues 357–406 are extracellular; that stretch reads NQMPKIQWTDLQNATIHNTTQWTSSIPSSGNHSVEPTGCPVIQTWCLYTP. N-linked (GlcNAc...) asparagine glycosylation is found at Asn-369 and Asn-374. A helical transmembrane segment spans residues 407–427; it reads VIHLAQYLTSDILIGVGYPIC. Over 428-445 the chain is Cytoplasmic; sequence NVMSYTLYSKIIGPKPQG. Residues 446 to 466 form a helical membrane-spanning segment; it reads LYMGWLTAAGSAARTLGPVFV. Topologically, residues 467–476 are extracellular; sequence SQIYTHLGTR. A helical membrane pass occupies residues 477 to 497; the sequence is WTFGIICAFVALSLLHLTAVY. Residues 498–510 lie on the Cytoplasmic side of the membrane; it reads KRLIPFSTRYERL.

Belongs to the major facilitator superfamily.

The protein resides in the lysosome membrane. Its function is as follows. May be a carrier that transport small solutes by using chemiosmotic ion gradients. The chain is Major facilitator superfamily domain-containing protein 8 (mfsd8) from Xenopus laevis (African clawed frog).